The primary structure comprises 365 residues: Peptide chain release factor 2 (365 aa).

The residue at position 252 (Q252) is an N5-methylglutamine.

This sequence belongs to the prokaryotic/mitochondrial release factor family. Methylated by PrmC. Methylation increases the termination efficiency of RF2.

It is found in the cytoplasm. Functionally, peptide chain release factor 2 directs the termination of translation in response to the peptide chain termination codons UGA and UAA. The chain is Peptide chain release factor 2 from Shewanella baltica (strain OS223).